The chain runs to 32 residues: PRRRRRSSSRPIRRRRRPRVSRRRRRGGRRRR.

The interval 1-32 (PRRRRRSSSRPIRRRRRPRVSRRRRRGGRRRR) is disordered.

Testis.

It localises to the nucleus. It is found in the chromosome. Functionally, protamines substitute for histones in the chromatin of sperm during the haploid phase of spermatogenesis. They compact sperm DNA into a highly condensed, stable and inactive complex. The chain is Protamine-3A from Oncorhynchus mykiss (Rainbow trout).